The chain runs to 63 residues: Conotoxin TxMRCL-D012 (63 aa).

The signal sequence occupies residues 1 to 19 (MRCLPVFVILLLLIASTPS). The propeptide occupies 20-47 (DTVPLKTKDDMPQASFHGNARRTLQMLS). Position 50 is a pyrrolidone carboxylic acid (Gln50).

Belongs to the conotoxin T superfamily. Contains 2 disulfide bonds that can be either 'C1-C3, C2-C4' or 'C1-C4, C2-C3', since these disulfide connectivities have been observed for conotoxins with cysteine framework V (for examples, see AC P0DQQ7 and AC P81755). In terms of tissue distribution, expressed by the venom duct.

Its subcellular location is the secreted. The protein is Conotoxin TxMRCL-D012 of Conus textile (Cloth-of-gold cone).